A 60-amino-acid chain; its full sequence is Large ribosomal subunit protein uL30 (60 aa).

Belongs to the universal ribosomal protein uL30 family. Part of the 50S ribosomal subunit.

The sequence is that of Large ribosomal subunit protein uL30 from Pediococcus pentosaceus (strain ATCC 25745 / CCUG 21536 / LMG 10740 / 183-1w).